The sequence spans 257 residues: Dihydroorotate dehydrogenase B (NAD(+)), electron transfer subunit (257 aa).

Positions 2-102 (IGRERMTVAS…LGPLGNGFPL (101 aa)) constitute an FAD-binding FR-type domain. Residues 53 to 56 (RPLS), 70 to 72 (IYR), and 77 to 78 (GT) each bind FAD. [2Fe-2S] cluster-binding residues include cysteine 221, cysteine 226, cysteine 229, and cysteine 244.

The protein belongs to the PyrK family. Heterotetramer of 2 PyrK and 2 PyrD type B subunits. It depends on [2Fe-2S] cluster as a cofactor. Requires FAD as cofactor.

Its pathway is pyrimidine metabolism; UMP biosynthesis via de novo pathway; orotate from (S)-dihydroorotate (NAD(+) route): step 1/1. Functionally, responsible for channeling the electrons from the oxidation of dihydroorotate from the FMN redox center in the PyrD type B subunit to the ultimate electron acceptor NAD(+). The chain is Dihydroorotate dehydrogenase B (NAD(+)), electron transfer subunit from Bacillus caldolyticus.